The following is a 453-amino-acid chain: UPF0210 protein Mbur_0828 (453 aa).

The protein belongs to the UPF0210 family.

The chain is UPF0210 protein Mbur_0828 from Methanococcoides burtonii (strain DSM 6242 / NBRC 107633 / OCM 468 / ACE-M).